The sequence spans 333 residues: Syntaxin-4 (333 aa).

The Cytoplasmic segment spans residues 1–312; it reads MGKDRLPELL…QHQKKARKKK (312 aa). The segment covering 50–66 has biased composition (low complexity); that stretch reads YSVVSQNSHSCSNNNSS. The disordered stretch occupies residues 50-81; the sequence is YSVVSQNSHSCSNNNSSTEPKDRSSSKMTQYG. Residues 91 to 116 adopt a coiled-coil conformation; the sequence is YTEIRQQLAQIAANLETMNRMAQTVN. Residues 239–301 enclose the t-SNARE coiled-coil homology domain; sequence LREMMDRFNE…DKGADELDQA (63 aa). The helical; Anchor for type IV membrane protein transmembrane segment at 313–333 threads the bilayer; that stretch reads IMLIVILAAVLLVLLLVGIYL.

The protein belongs to the syntaxin family.

Its subcellular location is the membrane. Its function is as follows. Potentially involved in docking of synaptic vesicles at presynaptic active zones. The polypeptide is Syntaxin-4 (Drosophila melanogaster (Fruit fly)).